Here is a 136-residue protein sequence, read N- to C-terminus: Protein NrdI (136 aa).

The protein belongs to the NrdI family.

Its function is as follows. Probably involved in ribonucleotide reductase function. The polypeptide is Protein NrdI (Escherichia coli O1:K1 / APEC).